Reading from the N-terminus, the 477-residue chain is Exodeoxyribonuclease 7 large subunit (477 aa).

The disordered stretch occupies residues lysine 452–glycine 477.

The protein belongs to the XseA family. As to quaternary structure, heterooligomer composed of large and small subunits.

It is found in the cytoplasm. The catalysed reaction is Exonucleolytic cleavage in either 5'- to 3'- or 3'- to 5'-direction to yield nucleoside 5'-phosphates.. Functionally, bidirectionally degrades single-stranded DNA into large acid-insoluble oligonucleotides, which are then degraded further into small acid-soluble oligonucleotides. The chain is Exodeoxyribonuclease 7 large subunit from Erythrobacter litoralis (strain HTCC2594).